Consider the following 456-residue polypeptide: Bifunctional protein GlmU (456 aa).

Residues 1 to 229 (MTKKALSAVI…VMEVEGANNR (229 aa)) are pyrophosphorylase. UDP-N-acetyl-alpha-D-glucosamine-binding positions include 11–14 (LAAG), K25, Q76, 81–82 (GT), 103–105 (YGD), G140, E154, N169, and N227. D105 serves as a coordination point for Mg(2+). N227 is a Mg(2+) binding site. The tract at residues 230 to 250 (LQLAALERYFQNKQASKLLLE) is linker. Residues 251–456 (GVMIYDPARF…QGWQRPIKKK (206 aa)) are N-acetyltransferase. R333 and K351 together coordinate UDP-N-acetyl-alpha-D-glucosamine. H363 functions as the Proton acceptor in the catalytic mechanism. Positions 366 and 377 each coordinate UDP-N-acetyl-alpha-D-glucosamine. Acetyl-CoA contacts are provided by residues A380, 386 to 387 (NY), S405, A423, and R440.

It in the N-terminal section; belongs to the N-acetylglucosamine-1-phosphate uridyltransferase family. In the C-terminal section; belongs to the transferase hexapeptide repeat family. As to quaternary structure, homotrimer. Requires Mg(2+) as cofactor.

Its subcellular location is the cytoplasm. The catalysed reaction is alpha-D-glucosamine 1-phosphate + acetyl-CoA = N-acetyl-alpha-D-glucosamine 1-phosphate + CoA + H(+). It carries out the reaction N-acetyl-alpha-D-glucosamine 1-phosphate + UTP + H(+) = UDP-N-acetyl-alpha-D-glucosamine + diphosphate. The protein operates within nucleotide-sugar biosynthesis; UDP-N-acetyl-alpha-D-glucosamine biosynthesis; N-acetyl-alpha-D-glucosamine 1-phosphate from alpha-D-glucosamine 6-phosphate (route II): step 2/2. It participates in nucleotide-sugar biosynthesis; UDP-N-acetyl-alpha-D-glucosamine biosynthesis; UDP-N-acetyl-alpha-D-glucosamine from N-acetyl-alpha-D-glucosamine 1-phosphate: step 1/1. Its pathway is bacterial outer membrane biogenesis; LPS lipid A biosynthesis. In terms of biological role, catalyzes the last two sequential reactions in the de novo biosynthetic pathway for UDP-N-acetylglucosamine (UDP-GlcNAc). The C-terminal domain catalyzes the transfer of acetyl group from acetyl coenzyme A to glucosamine-1-phosphate (GlcN-1-P) to produce N-acetylglucosamine-1-phosphate (GlcNAc-1-P), which is converted into UDP-GlcNAc by the transfer of uridine 5-monophosphate (from uridine 5-triphosphate), a reaction catalyzed by the N-terminal domain. The sequence is that of Bifunctional protein GlmU from Haemophilus influenzae (strain ATCC 51907 / DSM 11121 / KW20 / Rd).